We begin with the raw amino-acid sequence, 1227 residues long: Splicing factor 3B subunit 3 (1227 aa).

It belongs to the RSE1 family. Identified in the spliceosome A complex; remains associated with the spliceosome throughout the splicing process. Component of the spliceosome B complex. Identified in the spliceosome C complex. Identified in the spliceosome E complex. Component of the U11/U12 snRNPs that are part of the U12-type spliceosome. Component of splicing factor SF3B complex. Identified in the SAGA transcription regulatory histone acetylation (HAT) complex; the interaction is RNA-independent.

The protein localises to the nucleus. Its function is as follows. Involved in pre-mRNA splicing as a component of the splicing factor SF3B complex, a constituent of the spliceosome. SF3B complex is required for 'A' complex assembly formed by the stable binding of U2 snRNP to the branchpoint sequence (BPS) in pre-mRNA. Sequence independent binding of SF3A/SF3B complex upstream of the branch site is essential, it may anchor U2 snRNP to the pre-mRNA. May also be involved in the assembly of the 'E' complex. Also belongs to the minor U12-dependent spliceosome, which is involved in the splicing of rare class of nuclear pre-mRNA intron. This Drosophila melanogaster (Fruit fly) protein is Splicing factor 3B subunit 3.